A 194-amino-acid polypeptide reads, in one-letter code: WASH complex subunit 3 (194 aa).

At Met1 the chain carries N-acetylmethionine. Residues 46–74 adopt a coiled-coil conformation; sequence TVCEEKLADLSLRIQQIETTLNILDAKLS. Residues 98-123 show a composition bias toward polar residues; it reads THSEATSEQSQQNSLQDSGPQESEVT. Disordered regions lie at residues 98–125 and 158–194; these read THSE…VTPE and SEGL…SFSD.

This sequence belongs to the CCDC53 family. As to quaternary structure, component of the WASH core complex also described as WASH regulatory complex (SHRC) composed of WASHC1, WASHC2, WASHC3, WASHC4 and WASHC5. The WASH core complex associates via WASHC2 with the F-actin-capping protein dimer (formed by CAPZA1, CAPZA2 or CAPZA3 and CAPZB) in a transient or substoichiometric manner which was initially described as WASH complex.

It localises to the early endosome. Functionally, acts as a component of the WASH core complex that functions as a nucleation-promoting factor (NPF) at the surface of endosomes, where it recruits and activates the Arp2/3 complex to induce actin polymerization, playing a key role in the fission of tubules that serve as transport intermediates during endosome sorting. In Bos taurus (Bovine), this protein is WASH complex subunit 3.